The following is a 343-amino-acid chain: MDASLSPDQLSFPAVWRHPHLLDLERLTAAEILAVLRTADQLKTMTEGCRRKVPLLTGKTCANLFFENSTRTRNSFSLAAKRLGADTVEFSSSGSSVAKGETFVDTAKTIEAMGVDWVVTRHSTPGTPHLLARELDCCVLNAGDGPHEHPTQGLLDMLTILQHRIGSDWKNEAADPEKVFAGMTVALVGDIAHSRTARSNLWGLRKLGAHVIICGPPTLVSHRWEELGFEVAHRLDEIVHRCDVLNLLRIQFERQKARPFPSVYEYAALYAMNGERLRLAKDDILIMAPGPINRGVEITPEVADGPHSVILEQVTNGIAVRMASLWLLANAKENADASAENLS.

Residues Arg71 and Thr72 each coordinate carbamoyl phosphate. Residue Lys99 participates in L-aspartate binding. Carbamoyl phosphate contacts are provided by Arg121, His149, and Gln152. L-aspartate contacts are provided by Arg195 and Arg249. Gly290 and Pro291 together coordinate carbamoyl phosphate.

It belongs to the aspartate/ornithine carbamoyltransferase superfamily. ATCase family. Heterododecamer (2C3:3R2) of six catalytic PyrB chains organized as two trimers (C3), and six regulatory PyrI chains organized as three dimers (R2).

It catalyses the reaction carbamoyl phosphate + L-aspartate = N-carbamoyl-L-aspartate + phosphate + H(+). It functions in the pathway pyrimidine metabolism; UMP biosynthesis via de novo pathway; (S)-dihydroorotate from bicarbonate: step 2/3. Its function is as follows. Catalyzes the condensation of carbamoyl phosphate and aspartate to form carbamoyl aspartate and inorganic phosphate, the committed step in the de novo pyrimidine nucleotide biosynthesis pathway. The chain is Aspartate carbamoyltransferase catalytic subunit from Rhodopirellula baltica (strain DSM 10527 / NCIMB 13988 / SH1).